A 502-amino-acid chain; its full sequence is Putative ZDHHC-type palmitoyltransferase 3 (502 aa).

The tract at residues 1–80 is disordered; sequence MVNNNNKNNK…ESTNENNKKL (80 aa). Positions 10–30 are enriched in basic and acidic residues; that stretch reads KINDRENEENEKNKKKDKIYE. Low complexity predominate over residues 31–52; sequence NKIGINENNNENNNYQNENFIY. N58 is a glycosylation site (N-linked (GlcNAc...) asparagine). Acidic residues predominate over residues 59 to 73; it reads DTQEGDISEIQEEST. 2 helical membrane-spanning segments follow: residues 104–124 and 134–154; these read FFIVTQIFILVPSLFFEIKLV and LEISNYIITLTLLVFIFYNLY. The interval 200–281 is disordered; that stretch reads IANDDPISSS…NNNNNNNKNQ (82 aa). Positions 203 to 212 are enriched in low complexity; it reads DDPISSSSDF. Acidic residues predominate over residues 213–222; it reads SDSDDDDQDE. Residues 248–280 show a composition bias toward low complexity; that stretch reads NSNNNNSNNNNNNNKNRNRNNNNNNNNNNNNKN. N-linked (GlcNAc...) asparagine glycans are attached at residues N252 and N280. One can recognise a DHHC domain in the interval 299–349; it reads KFCITCGLYREPRSFHCSTCNNCVENFDHHCVWIGNCIGRRNYREFFYFIT. The S-palmitoyl cysteine intermediate role is filled by C329. A helical transmembrane segment spans residues 344–364; that stretch reads FFYFITTTLIYALYLLSMSIV. Residues N371, N388, and N393 are each glycosylated (N-linked (GlcNAc...) asparagine). Residues 419–439 form a helical membrane-spanning segment; sequence GLCIFIIIFGFIMSLLLGFLV. N449, N483, and N494 each carry an N-linked (GlcNAc...) asparagine glycan.

Belongs to the DHHC palmitoyltransferase family.

It localises to the membrane. The catalysed reaction is L-cysteinyl-[protein] + hexadecanoyl-CoA = S-hexadecanoyl-L-cysteinyl-[protein] + CoA. This Dictyostelium discoideum (Social amoeba) protein is Putative ZDHHC-type palmitoyltransferase 3.